The primary structure comprises 96 residues: Acylphosphatase (96 aa).

Residues 9-96 (CAEIYVSGRV…DTFTDFFIKR (88 aa)) form the Acylphosphatase-like domain. Residues Arg24 and Asn42 contribute to the active site.

The protein belongs to the acylphosphatase family.

It carries out the reaction an acyl phosphate + H2O = a carboxylate + phosphate + H(+). The polypeptide is Acylphosphatase (acyP) (Methanococcoides burtonii (strain DSM 6242 / NBRC 107633 / OCM 468 / ACE-M)).